The chain runs to 450 residues: Interferon regulatory factor 4 (450 aa).

The IRF tryptophan pentad repeat DNA-binding region spans Asn-21–Pro-129. Phosphoserine; by ROCK2 is present on residues Ser-446 and Ser-447.

It belongs to the IRF family. In terms of assembly, interacts with SPIB and DEF6. Interacts with the BATF-JUNB heterodimer. Interacts with BATF (via bZIP domain); the interaction is direct. Directly interacts with NLRP3 in the nucleus of Th2 cells; this interaction enhances IRF4 ability to bind to the IL4 promoter and is required for optimal IRF4-dependent IL4 transcription. Interacts with SPI1. In terms of processing, phosphorylation by ROCK2 regulates IL-17 and IL-21 production. Lymphoid cells.

The protein resides in the nucleus. Its subcellular location is the cytoplasm. In terms of biological role, transcriptional activator. Binds to the interferon-stimulated response element (ISRE) of the MHC class I promoter. Binds the immunoglobulin lambda light chain enhancer, together with PU.1. Probably plays a role in ISRE-targeted signal transduction mechanisms specific to lymphoid cells. Involved in CD8(+) dendritic cell differentiation by forming a complex with the BATF-JUNB heterodimer in immune cells, leading to recognition of AICE sequence (5'-TGAnTCA/GAAA-3'), an immune-specific regulatory element, followed by cooperative binding of BATF and IRF4 and activation of genes. This Mus musculus (Mouse) protein is Interferon regulatory factor 4.